A 348-amino-acid chain; its full sequence is GPALPP motifs-containing protein 1 (348 aa).

2 disordered regions span residues 1-163 and 177-317; these read MARD…AKGP and QRMK…DLKV. At alanine 2 the chain carries N-acetylalanine. Residues 7 to 12 carry the GPALPP motif 1 motif; sequence GPALPP. A compositionally biased stretch (basic and acidic residues) spans 14–27; that stretch reads FKERATVEDQERDP. Phosphoserine is present on serine 28. The GPALPP motif 2 motif lies at 32–37; that stretch reads GPALPP. The segment covering 41–59 has biased composition (low complexity); sequence SSSSDSSDSNEDSSSLSEE. The span at 60–69 shows a compositional bias: acidic residues; that stretch reads GNQESEEDDA. The GPALPP motif 3 signature appears at 93 to 98; the sequence is GPALPP. Position 106 is a phosphoserine (serine 106). Over residues 108–117 the composition is skewed to pro residues; that stretch reads PRPIIGPALP. Positions 113-118 match the GPALPP motif 4 motif; the sequence is GPALPP. 3 positions are modified to phosphoserine: serine 138, serine 143, and serine 148. The segment covering 144 to 154 has biased composition (acidic residues); the sequence is EEAESGEDEDI. Composition is skewed to basic and acidic residues over residues 177 to 195, 235 to 269, 277 to 287, and 295 to 317; these read QRMK…KPVT, PADR…KRLA, ESKRSESLMDI, and KAAE…DLKV. Glycyl lysine isopeptide (Lys-Gly) (interchain with G-Cter in SUMO2) cross-links involve residues lysine 279 and lysine 316.

In Rattus norvegicus (Rat), this protein is GPALPP motifs-containing protein 1 (Gpalpp1).